The chain runs to 437 residues: Probable D-serine dehydratase (437 aa).

Position 106 is an N6-(pyridoxal phosphate)lysine (Lys-106).

The protein belongs to the serine/threonine dehydratase family. DsdA subfamily. The cofactor is pyridoxal 5'-phosphate.

The enzyme catalyses D-serine = pyruvate + NH4(+). The chain is Probable D-serine dehydratase from Hahella chejuensis (strain KCTC 2396).